A 29-amino-acid polypeptide reads, in one-letter code: uncharacterized protein (29 aa).

This is an uncharacterized protein from Saccharomyces cerevisiae (strain ATCC 204508 / S288c) (Baker's yeast).